The primary structure comprises 91 residues: ATP synthase subunit c 1 (91 aa).

2 helical membrane passes run 4-24 (FTMC…GTAI) and 53-73 (IGLA…LIIL).

It belongs to the ATPase C chain family. As to quaternary structure, F-type ATPases have 2 components, F(1) - the catalytic core - and F(0) - the membrane proton channel. F(1) has five subunits: alpha(3), beta(3), gamma(1), delta(1), epsilon(1). F(0) has three main subunits: a(1), b(2) and c(10-14). The alpha and beta chains form an alternating ring which encloses part of the gamma chain. F(1) is attached to F(0) by a central stalk formed by the gamma and epsilon chains, while a peripheral stalk is formed by the delta and b chains.

It localises to the cell inner membrane. Its function is as follows. F(1)F(0) ATP synthase produces ATP from ADP in the presence of a proton or sodium gradient. F-type ATPases consist of two structural domains, F(1) containing the extramembraneous catalytic core and F(0) containing the membrane proton channel, linked together by a central stalk and a peripheral stalk. During catalysis, ATP synthesis in the catalytic domain of F(1) is coupled via a rotary mechanism of the central stalk subunits to proton translocation. Functionally, key component of the F(0) channel; it plays a direct role in translocation across the membrane. A homomeric c-ring of between 10-14 subunits forms the central stalk rotor element with the F(1) delta and epsilon subunits. This Pelobacter propionicus (strain DSM 2379 / NBRC 103807 / OttBd1) protein is ATP synthase subunit c 1.